The primary structure comprises 324 residues: Acetyl-coenzyme A carboxylase carboxyl transferase subunit alpha (324 aa).

In terms of domain architecture, CoA carboxyltransferase C-terminal spans 37–291; that stretch reads ILEDKLENLE…NVVLQKTFEQ (255 aa).

This sequence belongs to the AccA family. As to quaternary structure, acetyl-CoA carboxylase is a heterohexamer composed of biotin carboxyl carrier protein (AccB), biotin carboxylase (AccC) and two subunits each of ACCase subunit alpha (AccA) and ACCase subunit beta (AccD).

It localises to the cytoplasm. It carries out the reaction N(6)-carboxybiotinyl-L-lysyl-[protein] + acetyl-CoA = N(6)-biotinyl-L-lysyl-[protein] + malonyl-CoA. Its pathway is lipid metabolism; malonyl-CoA biosynthesis; malonyl-CoA from acetyl-CoA: step 1/1. Its function is as follows. Component of the acetyl coenzyme A carboxylase (ACC) complex. First, biotin carboxylase catalyzes the carboxylation of biotin on its carrier protein (BCCP) and then the CO(2) group is transferred by the carboxyltransferase to acetyl-CoA to form malonyl-CoA. The sequence is that of Acetyl-coenzyme A carboxylase carboxyl transferase subunit alpha from Bacillus cytotoxicus (strain DSM 22905 / CIP 110041 / 391-98 / NVH 391-98).